The following is an 87-amino-acid chain: Cell division topological specificity factor (87 aa).

Belongs to the MinE family.

Its function is as follows. Prevents the cell division inhibition by proteins MinC and MinD at internal division sites while permitting inhibition at polar sites. This ensures cell division at the proper site by restricting the formation of a division septum at the midpoint of the long axis of the cell. In Leptothrix cholodnii (strain ATCC 51168 / LMG 8142 / SP-6) (Leptothrix discophora (strain SP-6)), this protein is Cell division topological specificity factor.